The following is a 108-amino-acid chain: uncharacterized protein (108 aa).

3 helical membrane passes run 26-46, 54-74, and 84-104; these read GAVY…ALII, LMTL…PLIF, and INYQ…CIYM.

Its subcellular location is the cell membrane. This is an uncharacterized protein from Methanocaldococcus jannaschii (strain ATCC 43067 / DSM 2661 / JAL-1 / JCM 10045 / NBRC 100440) (Methanococcus jannaschii).